A 367-amino-acid polypeptide reads, in one-letter code: Chorismate synthase (367 aa).

The interval 41-60 is disordered; sequence FTHDLQRRASGKSRHTSARR. Residues R48 and R54 each contribute to the NADP(+) site. Residues 125–127, 238–239, G278, 293–297, and R319 each bind FMN; these read RSS, NA, and KPTSS.

This sequence belongs to the chorismate synthase family. Homotetramer. Requires FMNH2 as cofactor.

It carries out the reaction 5-O-(1-carboxyvinyl)-3-phosphoshikimate = chorismate + phosphate. The protein operates within metabolic intermediate biosynthesis; chorismate biosynthesis; chorismate from D-erythrose 4-phosphate and phosphoenolpyruvate: step 7/7. Catalyzes the anti-1,4-elimination of the C-3 phosphate and the C-6 proR hydrogen from 5-enolpyruvylshikimate-3-phosphate (EPSP) to yield chorismate, which is the branch point compound that serves as the starting substrate for the three terminal pathways of aromatic amino acid biosynthesis. This reaction introduces a second double bond into the aromatic ring system. The sequence is that of Chorismate synthase from Xanthomonas euvesicatoria pv. vesicatoria (strain 85-10) (Xanthomonas campestris pv. vesicatoria).